The following is a 116-amino-acid chain: MSAVAEAPLPIQMTDAAANKVKNLITEEENPELKLRVYITGGGCSGFQYGFTFDEKINEGDTVVEKSGVTMVIDPMSLQYLVGGSVDYTEGLEGSRFTVTNPNASTTCGCGSSFSI.

3 residues coordinate iron-sulfur cluster: Cys-44, Cys-108, and Cys-110.

The protein belongs to the HesB/IscA family. In terms of assembly, homodimer. It depends on iron-sulfur cluster as a cofactor.

In terms of biological role, required for insertion of 4Fe-4S clusters for at least IspG. The protein is Iron-sulfur cluster insertion protein ErpA of Aeromonas salmonicida (strain A449).